The sequence spans 298 residues: Cholesterol 25-hydroxylase (298 aa).

A glycan (N-linked (GlcNAc...) asparagine) is linked at Asn5. 3 consecutive transmembrane segments (helical) span residues 38–58, 88–108, and 124–144; these read IFPVTFSIITYVGFCLPFVVL, LGLTLYQHLVFVFPVTLLHWV, and LLSHVLICLLLFDTEIFAWHL. A Fatty acid hydroxylase domain is found at 128-263; it reads VLICLLLFDT…FTHWDKMLGT (136 aa). The Histidine box-1 signature appears at 142–146; sequence WHLLH. Residues 157–161 carry the Histidine box-2 motif; it reads HKVHH. Asn163 carries N-linked (GlcNAc...) asparagine glycosylation. The short motif at 238–244 is the Histidine box-3 element; the sequence is HHDMHHS.

This sequence belongs to the sterol desaturase family. Requires Fe cation as cofactor. In terms of processing, N-glycosylated. As to expression, widely expressed at low level and at higher level in the lung. Weakly expressed in the heart, lung and kidney.

It localises to the endoplasmic reticulum membrane. It carries out the reaction cholesterol + AH2 + O2 = 25-hydroxycholesterol + A + H2O. The enzyme catalyses cholesterol + NADPH + O2 + H(+) = 25-hydroxycholesterol + NADP(+) + H2O. Functionally, catalyzes the formation of 25-hydroxycholesterol from cholesterol, leading to repress cholesterol biosynthetic enzymes. Plays a key role in cell positioning and movement in lymphoid tissues: 25-hydroxycholesterol is an intermediate in biosynthesis of 7-alpha,25-dihydroxycholesterol (7-alpha,25-OHC), an oxysterol that acts as a ligand for the G protein-coupled receptor GPR183/EBI2, a chemotactic receptor for a number of lymphoid cells. May play an important role in regulating lipid metabolism by synthesizing a corepressor that blocks sterol regulatory element binding protein (SREBP) processing. In testis, production of 25-hydroxycholesterol by macrophages may play a role in Leydig cell differentiation. Required to restrain inflammation in macrophages: production of 25-hydroxycholesterol protects macrophages from cholesterol overload, thereby preventing mitochondrial DNA release and subsequent activation of the AIM2 inflammasome. Interferon-stimulated gene which has broad antiviral activities against a wide range of enveloped viruses. This Mus musculus (Mouse) protein is Cholesterol 25-hydroxylase.